A 237-amino-acid polypeptide reads, in one-letter code: Bax inhibitor 1 (237 aa).

At 1-29 the chain is on the cytoplasmic side; it reads MNIFDRKINFDALLKFSHITPSTQQHLKK. Residue Lys7 forms a Glycyl lysine isopeptide (Lys-Gly) (interchain with G-Cter in ubiquitin) linkage. A helical membrane pass occupies residues 30-50; it reads VYASFALCMFVAAAGAYVHVV. Topologically, residues 51-52 are lumenal; sequence TH. The helical transmembrane segment at 53–73 threads the bilayer; sequence FIQAGLLSALGSLALMIWLMA. At 74-86 the chain is on the cytoplasmic side; it reads TPHSHETEQKRLG. The chain crosses the membrane as a helical span at residues 87–107; sequence LLAGFAFLTGVGLGPALELCI. Over 108 to 112 the chain is Lumenal; that stretch reads AVNPS. The helical transmembrane segment at 113–133 threads the bilayer; it reads ILPTAFMGTAMIFTCFSLSAL. Over 134-139 the chain is Cytoplasmic; sequence YARRRS. The helical transmembrane segment at 140-160 threads the bilayer; sequence YLFLGGILMSAMSLMLLSSLG. Over 161–166 the chain is Lumenal; the sequence is NLFFGS. A helical transmembrane segment spans residues 167–187; it reads IWLFQANLYLGLLVMCGFVLF. Residues 188 to 206 lie on the Cytoplasmic side of the membrane; the sequence is DTQLIIEKAEHGDKDYIWH. The helical intramembrane region spans 207 to 227; it reads CVDLFLDFVTLFRKLMLILAF. The Cytoplasmic portion of the chain corresponds to 228 to 237; the sequence is NEKDKKKEKK.

This sequence belongs to the BI1 family. Interacts with BCL2. Interacts with BCL2L1. Interacts with ERN1. Post-translationally, ubiquitinated by BFAR, leading to proteasomal degradation. Highly abundant in adult testis.

Its subcellular location is the endoplasmic reticulum membrane. Its function is as follows. Endoplasmic reticulum (ER)-resident protein that confers cellular protection as an anti-apoptotic protein by limiting multiple stress-inducing pathways surrounding the endoplasmic reticulum and mitochondria. Inhibits the activities of the key sensor for the endoplasmic reticulum unfolded protein response IRE1alpha/ERN1 both directly and by blocking BAX/BAK binding. Modulates ER calcium homeostasis by acting as a calcium-leak channel. Negatively regulates autophagy and autophagosome formation, especially during periods of nutrient deprivation, and reduces cell survival during starvation. The sequence is that of Bax inhibitor 1 (Tmbim6) from Mus musculus (Mouse).